A 237-amino-acid polypeptide reads, in one-letter code: Ribosomal RNA small subunit methyltransferase G (237 aa).

Residues glycine 72, leucine 77, alanine 123–glutamate 124, and arginine 138 each bind S-adenosyl-L-methionine. Positions threonine 210–arginine 237 are disordered. Residues serine 223–arginine 237 show a composition bias toward basic residues.

It belongs to the methyltransferase superfamily. RNA methyltransferase RsmG family.

It localises to the cytoplasm. Functionally, specifically methylates the N7 position of guanine in position 518 of 16S rRNA. This is Ribosomal RNA small subunit methyltransferase G from Thermobifida fusca (strain YX).